A 135-amino-acid chain; its full sequence is Large ribosomal subunit protein eL32 (135 aa).

The protein belongs to the eukaryotic ribosomal protein eL32 family. As to quaternary structure, component of the large ribosomal subunit.

The protein resides in the cytoplasm. Its function is as follows. Component of the large ribosomal subunit. The ribosome is a large ribonucleoprotein complex responsible for the synthesis of proteins in the cell. This is Large ribosomal subunit protein eL32 (rpl32) from Ictalurus punctatus (Channel catfish).